A 323-amino-acid chain; its full sequence is MENCPLVSVIVCAYNAEQYIDESISSIINQTYENLEIIVINDGSTDLTLSHLEEISKLDKRIKIISNKYNLGFINSLNIGLGCFSGKYFARMDADDIAKPSWIEKIVTYLEKNDHITAMGSYLEIIVEKECGIIGSQYKTGDIWKNPLLHNDICEAMLFYNPIHNNTMIMRANVYREHKLIFNKDYPYAEDYKFWSEVSRLGCLANYPEALVKYRLHGNQTSSVYNHEQNETAKKIKRENITYYLNKIGIDIKVINSVSLLEIYHVDKSNKVLKSILYEMYMSLDKYTITSLLHFIKYHLELFDLKQNLKIIKKFIRKINVIF.

Belongs to the glycosyltransferase 2 family.

This is an uncharacterized protein from Haemophilus influenzae (strain ATCC 51907 / DSM 11121 / KW20 / Rd).